Here is a 366-residue protein sequence, read N- to C-terminus: tRNA/tmRNA (uracil-C(5))-methyltransferase (366 aa).

Positions 190, 218, 223, 239, and 299 each coordinate S-adenosyl-L-methionine. Residue cysteine 324 is the Nucleophile of the active site. Glutamate 358 acts as the Proton acceptor in catalysis.

It belongs to the class I-like SAM-binding methyltransferase superfamily. RNA M5U methyltransferase family. TrmA subfamily.

It carries out the reaction uridine(54) in tRNA + S-adenosyl-L-methionine = 5-methyluridine(54) in tRNA + S-adenosyl-L-homocysteine + H(+). The catalysed reaction is uridine(341) in tmRNA + S-adenosyl-L-methionine = 5-methyluridine(341) in tmRNA + S-adenosyl-L-homocysteine + H(+). Dual-specificity methyltransferase that catalyzes the formation of 5-methyluridine at position 54 (m5U54) in all tRNAs, and that of position 341 (m5U341) in tmRNA (transfer-mRNA). The protein is tRNA/tmRNA (uracil-C(5))-methyltransferase of Escherichia coli (strain ATCC 8739 / DSM 1576 / NBRC 3972 / NCIMB 8545 / WDCM 00012 / Crooks).